We begin with the raw amino-acid sequence, 346 residues long: Protein FAF1 (346 aa).

Disordered regions lie at residues 22-120 and 323-346; these read QFGS…LRSG and KRDIARISGGERSGKFNGKKKSRR. The span at 31–65 shows a compositional bias: basic and acidic residues; it reads FEDKTKNIRTEVDTRDSSGDEIDNSDHGSDFKDGT. Over residues 72–85 the composition is skewed to acidic residues; sequence SDEDSGNETAEENN.

Interacts with KRR1.

It is found in the nucleus. The protein localises to the nucleolus. Functionally, required for pre-rRNA processing and 40S ribosomal subunit assembly. Seems to act in the processing of 35S rRNA at the A(0), A(1), and A(2) cleavage sites. The polypeptide is Protein FAF1 (FAF1) (Saccharomyces cerevisiae (strain ATCC 204508 / S288c) (Baker's yeast)).